We begin with the raw amino-acid sequence, 399 residues long: S-adenosylmethionine synthase (399 aa).

Position 17 (histidine 17) interacts with ATP. Mg(2+) is bound at residue aspartate 19. Residue glutamate 52 participates in K(+) binding. L-methionine is bound by residues glutamate 65 and glutamine 109. The flexible loop stretch occupies residues 109–119 (QSADIAQGVDA). Residues 177 to 179 (DSK), 243 to 244 (KF), aspartate 252, 258 to 259 (RK), alanine 275, and lysine 279 each bind ATP. An L-methionine-binding site is contributed by aspartate 252. Lysine 283 lines the L-methionine pocket.

Belongs to the AdoMet synthase family. In terms of assembly, homotetramer; dimer of dimers. Mg(2+) is required as a cofactor. Requires K(+) as cofactor.

Its subcellular location is the cytoplasm. The enzyme catalyses L-methionine + ATP + H2O = S-adenosyl-L-methionine + phosphate + diphosphate. It participates in amino-acid biosynthesis; S-adenosyl-L-methionine biosynthesis; S-adenosyl-L-methionine from L-methionine: step 1/1. Catalyzes the formation of S-adenosylmethionine (AdoMet) from methionine and ATP. The overall synthetic reaction is composed of two sequential steps, AdoMet formation and the subsequent tripolyphosphate hydrolysis which occurs prior to release of AdoMet from the enzyme. The sequence is that of S-adenosylmethionine synthase from Bradyrhizobium sp. (strain ORS 278).